The following is a 397-amino-acid chain: Enoyl-[acyl-carrier-protein] reductase [NADH] (397 aa).

Residues 48-53 (GASTGY), 74-75 (FE), 111-112 (DA), and 139-140 (AA) each bind NAD(+). Tyr-225 lines the substrate pocket. Catalysis depends on Tyr-235, which acts as the Proton donor. Residues Lys-244 and 273 to 275 (VVT) contribute to the NAD(+) site.

This sequence belongs to the TER reductase family. In terms of assembly, monomer.

The catalysed reaction is a 2,3-saturated acyl-[ACP] + NAD(+) = a (2E)-enoyl-[ACP] + NADH + H(+). It participates in lipid metabolism; fatty acid biosynthesis. Involved in the final reduction of the elongation cycle of fatty acid synthesis (FAS II). Catalyzes the reduction of a carbon-carbon double bond in an enoyl moiety that is covalently linked to an acyl carrier protein (ACP). This Burkholderia pseudomallei (strain 1710b) protein is Enoyl-[acyl-carrier-protein] reductase [NADH].